The sequence spans 481 residues: MVASPIHSRGLDLPLPSTMGEFGLSLPRSPLFGTDGIRGKAGELLTAPLALSLGFWAGQVLREQTDTAGPVIIGQDSRLSSDMLANAMAAGLNSAGVEVWQLGLCPTPCVAYLTRKTAAIGGIMISASHNPPEDNGIKFFDHQGLKLPKSLATAIEAGLRGQNQTSGLNASQWGRSYGQPHRVQYYQDFLLGSLPQPLNFQGLKVVLDLAWGASVNLAPHIFRSLGAEVIALHDLADGSQINVDCGSTHLHRLQRAVRETGADLGFAFDGDADRVMAVDAQGRPVDGDYILFLWGKTLQESNHLPDNLIVGTVMANLAFERAWEKLGGKLIRTAVGDQNVQAQMWETGAMLGGEQSGHIICHHHSYSGDGLQAALHLATLVQKSGLSLSELLSESFQPYPQILRNVRVLDRERRLHWQECAPLQQAIATAEKSMGTTGRILVRASGTEPLIRVMVEAACAETAAHWSDQLTSTVQCHLGDS.

The Phosphoserine intermediate role is filled by Ser-128. Positions 128, 269, 271, and 273 each coordinate Mg(2+). Ser-128 is modified (phosphoserine).

It belongs to the phosphohexose mutase family. Mg(2+) is required as a cofactor. Activated by phosphorylation.

It carries out the reaction alpha-D-glucosamine 1-phosphate = D-glucosamine 6-phosphate. Catalyzes the conversion of glucosamine-6-phosphate to glucosamine-1-phosphate. This chain is Phosphoglucosamine mutase, found in Synechocystis sp. (strain ATCC 27184 / PCC 6803 / Kazusa).